Consider the following 465-residue polypeptide: Methionine aminopeptidase 2-2 (465 aa).

Basic and acidic residues predominate over residues 1 to 13 (MGSKTPNDHRRGP). The interval 1 to 92 (MGSKTPNDHR…KKKTLLGGLQ (92 aa)) is disordered. A compositionally biased stretch (acidic residues) spans 44–55 (GETEDGEDEDDD). The span at 71-86 (TKKKNKRKKNKKKKKT) shows a compositional bias: basic residues. Histidine 217 provides a ligand contact to substrate. The a divalent metal cation site is built by aspartate 238, aspartate 249, and histidine 318. Histidine 326 serves as a coordination point for substrate. 2 residues coordinate a divalent metal cation: glutamate 351 and glutamate 446.

Belongs to the peptidase M24A family. Methionine aminopeptidase eukaryotic type 2 subfamily. It depends on Co(2+) as a cofactor. The cofactor is Zn(2+). Mn(2+) is required as a cofactor. Fe(2+) serves as cofactor.

Its subcellular location is the cytoplasm. The catalysed reaction is Release of N-terminal amino acids, preferentially methionine, from peptides and arylamides.. Cotranslationally removes the N-terminal methionine from nascent proteins. The N-terminal methionine is often cleaved when the second residue in the primary sequence is small and uncharged (Met-Ala-, Cys, Gly, Pro, Ser, Thr, or Val). This chain is Methionine aminopeptidase 2-2, found in Blastomyces gilchristii (strain SLH14081) (Blastomyces dermatitidis).